The chain runs to 413 residues: Serine/threonine transporter SstT (413 aa).

9 consecutive transmembrane segments (helical) span residues 15–35, 48–68, 82–102, 141–161, 178–198, 216–236, 290–310, 330–350, and 357–377; these read NIVI…TLAP, FVSA…AASI, VIVL…VMSF, ALMT…GLGL, CISA…FGLV, LLAV…PLIV, IPLG…VLTL, LVAA…LLLI, and FGIS…IGVV.

It belongs to the dicarboxylate/amino acid:cation symporter (DAACS) (TC 2.A.23) family.

It is found in the cell inner membrane. It catalyses the reaction L-serine(in) + Na(+)(in) = L-serine(out) + Na(+)(out). The enzyme catalyses L-threonine(in) + Na(+)(in) = L-threonine(out) + Na(+)(out). Involved in the import of serine and threonine into the cell, with the concomitant import of sodium (symport system). In Aliivibrio fischeri (strain ATCC 700601 / ES114) (Vibrio fischeri), this protein is Serine/threonine transporter SstT.